The chain runs to 210 residues: Thymidylate kinase (210 aa).

10 to 17 lines the ATP pocket; it reads GPEGAGKS.

The protein belongs to the thymidylate kinase family.

The catalysed reaction is dTMP + ATP = dTDP + ADP. Phosphorylation of dTMP to form dTDP in both de novo and salvage pathways of dTTP synthesis. This Pseudomonas aeruginosa (strain UCBPP-PA14) protein is Thymidylate kinase.